Reading from the N-terminus, the 248-residue chain is MRQIIIAGNWKMNASKEATNTLVIGILSGMADVKSKVIVCVPSLYMSQVEVLVVDSQLNLGAQNLNVNKLGAFTGEISADMIKDFGAKYVIVGHSERRSLYGETDEIVAQKVQVALDNNLTPLFCIGELLEDRESNNTKSVVSKQIQVVIDRVGIEAFKNIIVAYEPVWAIGTNVTATPQQAQDTHAFIRSMLAEYDADIAQITSILYGGSMNSRNAAELLNCKDIDGGLIGGASLKAQDFLQICKAG.

9–11 (NWK) provides a ligand contact to substrate. Residue histidine 94 is the Electrophile of the active site. The active-site Proton acceptor is glutamate 166. Substrate is bound by residues glycine 172, serine 211, and 232 to 233 (GG).

Belongs to the triosephosphate isomerase family. As to quaternary structure, homodimer.

Its subcellular location is the cytoplasm. It catalyses the reaction D-glyceraldehyde 3-phosphate = dihydroxyacetone phosphate. Its pathway is carbohydrate biosynthesis; gluconeogenesis. The protein operates within carbohydrate degradation; glycolysis; D-glyceraldehyde 3-phosphate from glycerone phosphate: step 1/1. Its function is as follows. Involved in the gluconeogenesis. Catalyzes stereospecifically the conversion of dihydroxyacetone phosphate (DHAP) to D-glyceraldehyde-3-phosphate (G3P). The sequence is that of Triosephosphate isomerase from Ruthia magnifica subsp. Calyptogena magnifica.